The primary structure comprises 138 residues: Acidic phospholipase A2 MVL-PLA2 (138 aa).

An N-terminal signal peptide occupies residues 1 to 16 (MRTLWIVAVCLMGVEG). 7 disulfide bridges follow: Cys-42-Cys-131, Cys-44-Cys-60, Cys-59-Cys-111, Cys-65-Cys-138, Cys-66-Cys-104, Cys-73-Cys-97, and Cys-91-Cys-102. The Ca(2+) site is built by Tyr-43, Gly-45, and Gly-47. His-63 is an active-site residue. Asp-64 contributes to the Ca(2+) binding site. The May inhibit integrin function (Atypical cell attachment site) motif lies at 86-88 (NGD). Asp-105 is an active-site residue.

Belongs to the phospholipase A2 family. Group II subfamily. D49 sub-subfamily. The cofactor is Ca(2+). Expressed by the venom gland.

It is found in the secreted. It catalyses the reaction a 1,2-diacyl-sn-glycero-3-phosphocholine + H2O = a 1-acyl-sn-glycero-3-phosphocholine + a fatty acid + H(+). Functionally, snake venom phospholipase A2 (PLA2) that displays an inhibitory effect, independent from its catalytic activity, on tumor cell adhesion and migration. This effect is mediated via specific inhibition of integrins alpha-5/beta-1 (ITGA5/ITGB1), alpha-v/beta-3 (ITGAV/ITGB3) and alpha-v/beta-6 (ITGAV/ITGB6). PLA2 catalyzes the calcium-dependent hydrolysis of the 2-acyl groups in 3-sn-phosphoglycerides. The protein is Acidic phospholipase A2 MVL-PLA2 of Macrovipera lebetina transmediterranea (Blunt-nosed viper).